Here is a 276-residue protein sequence, read N- to C-terminus: Glutamate 5-kinase (276 aa).

K14 lines the ATP pocket. S54, D141, and N157 together coordinate substrate. Residues 177–178 (SD) and 219–225 (TGGMLTK) each bind ATP.

Belongs to the glutamate 5-kinase family.

Its subcellular location is the cytoplasm. It carries out the reaction L-glutamate + ATP = L-glutamyl 5-phosphate + ADP. Its pathway is amino-acid biosynthesis; L-proline biosynthesis; L-glutamate 5-semialdehyde from L-glutamate: step 1/2. In terms of biological role, catalyzes the transfer of a phosphate group to glutamate to form L-glutamate 5-phosphate. The chain is Glutamate 5-kinase from Listeria innocua serovar 6a (strain ATCC BAA-680 / CLIP 11262).